A 568-amino-acid chain; its full sequence is MKVSRQQYADLYGPTVGDRVRLGDTELLIEVERDLTTYGEEVKFGGGKVIRDGLGQSSAATRDDANVPDLVITNALILDYWGVIKADVGVKNGRISAIGKAGNPGTQDGVTPGLTIAASTEIVAGEGLVLTAGGVDTHIHFIAPQQCWTALESGVTTMIGGGTGPTAGTSATTCTPGQWHIHRMLESLAGLPLNFGLLGKGNASTQPPLAEQIRAGALGLKLHEDWGTTPAAIHAALSVAEDYDVQVAIHTDTLNESGFVEDAIRAFAGRTIHTFHTEGAGGGHAPDIIRVAGLPNVLPSSTNPTMPFTVNTIHEHLDMLMVCHHLSPRIPEDVHFAESRIRPETIAAEDVLHDLGVFSMMSSDSQAMGRVGEVITRTWQAAHKMKVQRGPLAPDGRADNFRARRYVAKYTINPAIAHGISHEVGSVEVGKLADLVLWSPAFFGAKPSLILKGGLVVAAQMGDANASIPTPQPVYPRPMFAAYGGCPDATCLHFVSQAGLEGGHLPDVGRRYSAVKHTRDIGKKDMQLNAETPDIQVNPETYEVRVNGELVTCEPVDELPLAQKYFLF.

Residues 133–568 form the Urease domain; sequence GGVDTHIHFI…LPLAQKYFLF (436 aa). Ni(2+)-binding residues include H138, H140, and K221. K221 carries the N6-carboxylysine modification. A substrate-binding site is contributed by H223. Ni(2+) is bound by residues H250 and H276. The Proton donor role is filled by H324. D364 lines the Ni(2+) pocket.

The protein belongs to the metallo-dependent hydrolases superfamily. Urease alpha subunit family. Heterohexamer of 3 UreC (alpha) and 3 UreAB (gamma/beta) subunits. Requires Ni cation as cofactor. In terms of processing, carboxylation allows a single lysine to coordinate two nickel ions.

It is found in the cytoplasm. It carries out the reaction urea + 2 H2O + H(+) = hydrogencarbonate + 2 NH4(+). It functions in the pathway nitrogen metabolism; urea degradation; CO(2) and NH(3) from urea (urease route): step 1/1. This is Urease subunit alpha from Deinococcus radiodurans (strain ATCC 13939 / DSM 20539 / JCM 16871 / CCUG 27074 / LMG 4051 / NBRC 15346 / NCIMB 9279 / VKM B-1422 / R1).